The sequence spans 385 residues: tRNA pseudouridine synthase D (385 aa).

D65 serves as the catalytic Nucleophile. A TRUD domain is found at 143–345; the sequence is GCENYFGEQR…SDGVRKAFFK (203 aa).

Belongs to the pseudouridine synthase TruD family.

The enzyme catalyses uridine(13) in tRNA = pseudouridine(13) in tRNA. In terms of biological role, responsible for synthesis of pseudouridine from uracil-13 in transfer RNAs. This is tRNA pseudouridine synthase D from Aquifex aeolicus (strain VF5).